We begin with the raw amino-acid sequence, 545 residues long: MAAKEVKFGRSAREKMLRGVDILADAVKVTLGPKGRNVVIDKSFGAPRITKDGVSVAKEIELEDKFENMGAQMVREVASKTNDIAGDGTTTATVLAQAIVREGAKAVAAGMNPMDLKRGIDLAVAEVVKDLLAKAKKINTSDEVAQVGTISANGEKQIGLDIAEAMQKVGNEGVITVEEAKTAETELEVVEGMQFDRGYLSPYFVTNPEKMVADLEDAFILLHEKKLSNLQAMLPVLEAVVQTGKPLLIIAEDVEGEALATLVVNKLRGGLKIAAVKAPGFGDRRKAMLEDIAILTGGTVISEDLGIKLESVTLDMLGRAKKVSITKENTTIVDGAGQKSDIEGRVAQIKAQIEETTSDYDREKLQERLAKLAGGVAVIRVGGATEVEVKEKKDRIDDALNATRAAVQEGIVPGGGVALLRSSVKITVKGENDDQDAGVNIVRRALQSPARQIVENAGDEASIVVGKILEKNTDDFGYNAQTGEYGDMIAMGIIDPVKVVRTALQDAASVASLLITTEAMIAELPKKDAPAMPGGMGGMGGMDMM.

Residues 30-33, K51, 87-91, G415, and D495 contribute to the ATP site; these read TLGP and DGTTT.

The protein belongs to the chaperonin (HSP60) family. In terms of assembly, forms a cylinder of 14 subunits composed of two heptameric rings stacked back-to-back. Interacts with the co-chaperonin GroES.

It is found in the cytoplasm. The enzyme catalyses ATP + H2O + a folded polypeptide = ADP + phosphate + an unfolded polypeptide.. Functionally, together with its co-chaperonin GroES, plays an essential role in assisting protein folding. The GroEL-GroES system forms a nano-cage that allows encapsulation of the non-native substrate proteins and provides a physical environment optimized to promote and accelerate protein folding. The protein is Chaperonin GroEL 1 of Rhizobium meliloti (strain 1021) (Ensifer meliloti).